A 567-amino-acid polypeptide reads, in one-letter code: Sporulation-specific protein 5 (567 aa).

Residues 1-18 (MNGIITPQKQKQLMSSPS) show a composition bias toward polar residues. Disordered regions lie at residues 1 to 39 (MNGIITPQKQKQLMSSPSRDPLSTTELSTPTSQTTVDVN) and 52 to 76 (ILLTPGTSPNATPGSSELGLSKKPN). The segment covering 21 to 35 (PLSTTELSTPTSQTT) has biased composition (low complexity). Residues 56–66 (PGTSPNATPGS) show a composition bias toward polar residues. RRM domains lie at 296–380 (RNVY…SLQD) and 384–462 (TNLY…FADS).

Its subcellular location is the cytoplasm. In terms of biological role, RNA-binding protein which plays a role in sporulation. Regulates the progression of meiosis I and may function in the vicinity of the Mei2 dot. This Schizosaccharomyces pombe (strain 972 / ATCC 24843) (Fission yeast) protein is Sporulation-specific protein 5 (spo5).